The sequence spans 215 residues: Riboflavin synthase (215 aa).

Lumazine-binding repeat units follow at residues 1–96 (MFTG…FGGH) and 97–193 (FVSG…YRFL). 2,4-dihydroxypteridine-binding positions include 4 to 6 (GII), 47 to 49 (CLT), 61 to 66 (DVMPET), 100 to 102 (GHV), Lys135, 144 to 146 (SLT), and 158 to 163 (SLIPHT).

Homotrimer. Can interact with 6,7-dimethyl-8-ribityllumazine synthase, forming a lumazine synthase/riboflavin synthase complex, also designated as 'heavy riboflavin synthase complex', which consists of a trimer of riboflavin synthase enclosed within an icosahedral structure composed of 60 subunits of 6,7-dimethyl-8-ribityllumazine synthase.

The catalysed reaction is 2 6,7-dimethyl-8-(1-D-ribityl)lumazine + H(+) = 5-amino-6-(D-ribitylamino)uracil + riboflavin. It participates in cofactor biosynthesis; riboflavin biosynthesis; riboflavin from 2-hydroxy-3-oxobutyl phosphate and 5-amino-6-(D-ribitylamino)uracil: step 2/2. Its activity is regulated as follows. Is activated by sulfite ions. Catalyzes the dismutation of two molecules of 6,7-dimethyl-8-ribityllumazine, resulting in the formation of riboflavin and 5-amino-6-(D-ribitylamino)uracil. This chain is Riboflavin synthase (ribE), found in Bacillus subtilis (strain 168).